Reading from the N-terminus, the 363-residue chain is UDP-N-acetylglucosamine--N-acetylmuramyl-(pentapeptide) pyrophosphoryl-undecaprenol N-acetylglucosamine transferase (363 aa).

UDP-N-acetyl-alpha-D-glucosamine-binding positions include 10–12 (TGG), Asn124, Ser195, Ile250, and Gln295.

Belongs to the glycosyltransferase 28 family. MurG subfamily.

Its subcellular location is the cell membrane. The enzyme catalyses di-trans,octa-cis-undecaprenyl diphospho-N-acetyl-alpha-D-muramoyl-L-alanyl-D-glutamyl-meso-2,6-diaminopimeloyl-D-alanyl-D-alanine + UDP-N-acetyl-alpha-D-glucosamine = di-trans,octa-cis-undecaprenyl diphospho-[N-acetyl-alpha-D-glucosaminyl-(1-&gt;4)]-N-acetyl-alpha-D-muramoyl-L-alanyl-D-glutamyl-meso-2,6-diaminopimeloyl-D-alanyl-D-alanine + UDP + H(+). It functions in the pathway cell wall biogenesis; peptidoglycan biosynthesis. Cell wall formation. Catalyzes the transfer of a GlcNAc subunit on undecaprenyl-pyrophosphoryl-MurNAc-pentapeptide (lipid intermediate I) to form undecaprenyl-pyrophosphoryl-MurNAc-(pentapeptide)GlcNAc (lipid intermediate II). In Listeria monocytogenes serotype 4b (strain CLIP80459), this protein is UDP-N-acetylglucosamine--N-acetylmuramyl-(pentapeptide) pyrophosphoryl-undecaprenol N-acetylglucosamine transferase.